Here is a 118-residue protein sequence, read N- to C-terminus: Ribosome-binding factor A (118 aa).

Belongs to the RbfA family. As to quaternary structure, monomer. Binds 30S ribosomal subunits, but not 50S ribosomal subunits or 70S ribosomes.

It is found in the cytoplasm. Its function is as follows. One of several proteins that assist in the late maturation steps of the functional core of the 30S ribosomal subunit. Associates with free 30S ribosomal subunits (but not with 30S subunits that are part of 70S ribosomes or polysomes). Required for efficient processing of 16S rRNA. May interact with the 5'-terminal helix region of 16S rRNA. This chain is Ribosome-binding factor A, found in Thermodesulfovibrio yellowstonii (strain ATCC 51303 / DSM 11347 / YP87).